The primary structure comprises 325 residues: Taste receptor type 2 member 7 (325 aa).

Over 1-9 the chain is Extracellular; it reads MADKVQTTL. A helical transmembrane segment spans residues 10–30; it reads LFLAVGEFSVGILGNAFIGLV. Residues 31–55 are Cytoplasmic-facing; the sequence is NCMDWVKKRKIASIDLILTSLAISR. The helical transmembrane segment at 56 to 76 threads the bilayer; it reads ICLLCVILLDCFILVLYPDVY. The Extracellular segment spans residues 77 to 94; that stretch reads ATGKEMRIIDFFWTLTNH. Residues 95–115 form a helical membrane-spanning segment; it reads LSIWFATCLSIYYFFRIANFF. Over 116–128 the chain is Cytoplasmic; that stretch reads HPLFLWMKWRIDR. A helical transmembrane segment spans residues 129 to 149; the sequence is VISWILLGCVVLSVFISLPAT. The Extracellular segment spans residues 150–187; that stretch reads ENLNADFRFCVKAKRKTNLTWSCRVNKTQHASTKLFLN. N-linked (GlcNAc...) asparagine glycans are attached at residues Asn167 and Asn175. The helical transmembrane segment at 188–208 threads the bilayer; it reads LATLLPFCVCLMSFFLLILSL. Over 209-235 the chain is Cytoplasmic; it reads RRHIRRMQLSATGCRDPSTEAHVRALK. Residues 236-256 form a helical membrane-spanning segment; sequence AVISFLLLFIAYYLSFLVATS. Residues 257-266 lie on the Extracellular side of the membrane; it reads SYFMPETELA. A helical membrane pass occupies residues 267 to 287; sequence VIFGESIALIYPSSHSFILIL. Topologically, residues 288–319 are cytoplasmic; that stretch reads GNNKLRHASLKVIWKVMSILKGRKFQQHKQIG.

This sequence belongs to the G-protein coupled receptor T2R family.

It is found in the membrane. Functionally, gustducin-coupled receptor implicated in the perception of bitter compounds in the oral cavity and the gastrointestinal tract. Signals through PLCB2 and the calcium-regulated cation channel TRPM5. This chain is Taste receptor type 2 member 7 (TAS2R7), found in Pan paniscus (Pygmy chimpanzee).